Consider the following 250-residue polypeptide: Manganese transport system ATP-binding protein MntB (250 aa).

In terms of domain architecture, ABC transporter spans 4–236 (VELDNVTVAY…NLQKTYGGRL (233 aa)). 36-43 (GPNGAGKS) contacts ATP.

Belongs to the ABC transporter superfamily. The complex is probably composed of two ATP-binding proteins (MntB), two transmembrane proteins (MntC and MntD) and a solute-binding protein (MntA).

Its subcellular location is the cell membrane. Probably part of the ABC transporter complex MntABCD involved in manganese import. Probably responsible for energy coupling to the transport system. This is Manganese transport system ATP-binding protein MntB from Bacillus subtilis (strain 168).